A 167-amino-acid chain; its full sequence is Claudin domain-containing protein 2 (167 aa).

The next 4 helical transmembrane spans lie at 7 to 27 (LQSG…LSTA), 59 to 79 (LAVT…GMVM), 96 to 116 (TSAF…GYTV), and 134 to 154 (WLAL…DMIM).

This sequence belongs to the PMP-22/EMP/MP20 family.

The protein resides in the membrane. In Homo sapiens (Human), this protein is Claudin domain-containing protein 2 (CLDND2).